The following is a 718-amino-acid chain: Exostosin-2 (718 aa).

The Cytoplasmic segment spans residues 1 to 25; sequence MCASVKSNIRGPALIPRMKTKHRIY. Residues 26-46 form a helical; Signal-anchor for type II membrane protein membrane-spanning segment; that stretch reads YVTLFSIVLLGLIATGMFQFW. Residues 47-718 are Lumenal-facing; it reads PHSIESSSDG…LKSFPNIGSL (672 aa). 4 cysteine pairs are disulfide-bonded: C85-C90, C96-C151, C286-C300, and C318-C339. A glycan (N-linked (GlcNAc...) asparagine) is linked at N288. UDP is bound by residues L461, R465, N490, and N517. Residues R465, N490, N517, R522, D538, D539, and D540 each contribute to the UDP-N-acetyl-alpha-D-glucosamine site. 2 residues coordinate UDP: D538 and D539. D540 lines the Mn(2+) pocket. Y582 and S584 together coordinate a protein. C626 and C676 are oxidised to a cystine. UDP-N-acetyl-alpha-D-glucosamine contacts are provided by E627 and D628. The N-linked (GlcNAc...) asparagine glycan is linked to N637. A protein-binding residues include K651 and K653. R673 contacts UDP-N-acetyl-alpha-D-glucosamine.

Belongs to the glycosyltransferase 47 family. Part of the heparan sulfate polymerase, a dimeric complex composed of EXT1 and EXT2. Could also form homooligomeric complexes. Interacts with NDST1. Interacts with GALNT5. Mn(2+) is required as a cofactor. Post-translationally, N-glycosylated at Asn-637. In terms of processing, a soluble form is generated by proteolytic processing. As to expression, expressed in heart, brain, spleen, lung, liver, skeletal muscle and testis. Heart shows a high expression.

The protein resides in the golgi apparatus membrane. It localises to the golgi apparatus. The protein localises to the cis-Golgi network membrane. It is found in the endoplasmic reticulum membrane. Its subcellular location is the secreted. The catalysed reaction is 3-O-{[(1-&gt;4)-beta-D-GlcA-(1-&gt;4)-alpha-D-GlcNAc](n)-(1-&gt;4)-beta-D-GlcA-(1-&gt;3)-beta-D-Gal-(1-&gt;3)-beta-D-Gal-(1-&gt;4)-beta-D-Xyl}-L-seryl-[protein] + UDP-N-acetyl-alpha-D-glucosamine = 3-O-{alpha-D-GlcNAc-[(1-&gt;4)-beta-D-GlcA-(1-&gt;4)-alpha-D-GlcNAc](n)-(1-&gt;4)-beta-D-GlcA-(1-&gt;3)-beta-D-Gal-(1-&gt;3)-beta-D-Gal-(1-&gt;4)-beta-D-Xyl}-L-seryl-[protein] + UDP + H(+). Its pathway is protein modification; protein glycosylation. Its function is as follows. Glycosyltransferase forming with EXT1 the heterodimeric heparan sulfate polymerase which catalyzes the elongation of the heparan sulfate glycan backbone. Glycan backbone extension consists in the alternating transfer of (1-&gt;4)-beta-D-GlcA and (1-&gt;4)-alpha-D-GlcNAc residues from their respective UDP-sugar donors. Both EXT1 and EXT2 are required for the full activity of the polymerase since EXT1 bears the N-acetylglucosaminyl-proteoglycan 4-beta-glucuronosyltransferase activity within the complex while EXT2 carries the glucuronosyl-N-acetylglucosaminyl-proteoglycan 4-alpha-N-acetylglucosaminyltransferase activity. Heparan sulfate proteoglycans are ubiquitous components of the extracellular matrix and play an important role in tissue homeostasis and signaling. The polypeptide is Exostosin-2 (Mus musculus (Mouse)).